Here is a 471-residue protein sequence, read N- to C-terminus: MLYAVRVRGIYATALVALALKKGYLLSDLSKTMLSRVEVPVSTRPPNITVKHGEESRDEIVIHAFPYEAGERFEADLLEEVGHAAVRRSLLGLRSVVDARAAEGCRAEGPGGVLIIVKGGECPQPGSMVRVTVVRSPPGSDVVEGRVGVELTGLTVRVMHPGSGVRISRHLTSEDAAKALKAVEASGIDLNQFSVHIRSGARLASEGDISDEIRRLAREAERLWREGPGGEPAVLSRGEYLSLVYLPSTAKHVMDGLRTSLYPTVNNHHSLKSWSSEAEGLLTDFAEEGVREGLWGGEAGDLIVRFISSRLVGRTAVVLHRRPDGETIRLGPFRVSSYRPSSGRGGEIVLERTFRSPGVYDGLGLERRPGDRGVTHVYMGDWLTIHEYYDKSGRLLGVYANINTPPEVGFQGLKYLDLLVDVVKRPGEEPETIDQGELEKACRSGLLTDRLCEEAARQAERASGLLQSRYP.

The protein belongs to the FAU-1 family.

Probable RNase involved in rRNA stability through maturation and/or degradation of precursor rRNAs. Binds to RNA in loop regions with AU-rich sequences. The protein is Probable ribonuclease FAU-1 of Aeropyrum pernix (strain ATCC 700893 / DSM 11879 / JCM 9820 / NBRC 100138 / K1).